The sequence spans 241 residues: Pyridoxine/pyridoxamine 5'-phosphate oxidase (241 aa).

Positions 1 to 35 are disordered; sequence MASNPPSAASPRRTAVSPGADRPDGPDPAGQRQSY. Substrate-binding positions include 32 to 35 and lysine 92; that span reads RQSY. Residues 87-92, 102-103, arginine 108, lysine 109, and glutamine 131 each bind FMN; these read RTVLLK and YT. Tyrosine 149, arginine 153, and serine 157 together coordinate substrate. FMN is bound by residues 166–167 and tryptophan 212; that span reads QS. 218-220 contributes to the substrate binding site; it reads RLH. Position 222 (arginine 222) interacts with FMN.

It belongs to the pyridoxamine 5'-phosphate oxidase family. Homodimer. FMN serves as cofactor.

The catalysed reaction is pyridoxamine 5'-phosphate + O2 + H2O = pyridoxal 5'-phosphate + H2O2 + NH4(+). It carries out the reaction pyridoxine 5'-phosphate + O2 = pyridoxal 5'-phosphate + H2O2. The protein operates within cofactor metabolism; pyridoxal 5'-phosphate salvage; pyridoxal 5'-phosphate from pyridoxamine 5'-phosphate: step 1/1. It participates in cofactor metabolism; pyridoxal 5'-phosphate salvage; pyridoxal 5'-phosphate from pyridoxine 5'-phosphate: step 1/1. Catalyzes the oxidation of either pyridoxine 5'-phosphate (PNP) or pyridoxamine 5'-phosphate (PMP) into pyridoxal 5'-phosphate (PLP). The sequence is that of Pyridoxine/pyridoxamine 5'-phosphate oxidase from Frankia alni (strain DSM 45986 / CECT 9034 / ACN14a).